We begin with the raw amino-acid sequence, 677 residues long: WD repeat-containing protein 48 (677 aa).

Residue Tyr-28 is modified to Phosphotyrosine. WD repeat units lie at residues 28–67, 73–112, 115–154, 166–205, 208–247, 250–289, 292–334, and 358–397; these read YNRN…QDPY, HHTD…CMST, THKD…ALTA, GNKD…KLMK, GHTD…CIAT, VHDE…IRVL, EEKA…NFRA, and KGGA…KVED. At Lys-214 the chain carries N6-acetyllysine. Lys-578 carries the N6-acetyllysine modification. Residues 607–628 form a disordered region; that stretch reads LDNESQTTSSSNNEKPGEQEKE. Residues 609 to 620 show a composition bias toward low complexity; the sequence is NESQTTSSSNNE. Thr-613 is subject to Phosphothreonine.

Belongs to the WD repeat WDR48 family. In terms of assembly, interacts with USP46. Interacts with USP1. Interacts with USP12. Component of the USP12-WDR20-WDR48 deubiquitinating complex. Component of the USP12-DMWD-WDR48 deubiquitinating complex. Interacts with PHLPP1. Interacts with RAD51AP1; the interaction is direct and promotes formation of a trimeric complex with RAD51 via RAD51AP1. Interacts with ATAD5; the interaction regulates USP1-mediated PCNA deubiquitination. Interacts with RAD51; the interaction is enhanced under replication stress. Interacts with ITCH; the interaction is more efficient when both USP12 and WDR48/UAF1 are involved and may facilitate recruitment of the USP12 deubiquitinating complex to Notch. As to quaternary structure, (Microbial infection) Interacts with papillomavirus HPV11 E1 protein. (Microbial infection) Interacts with Saimiriine herpesvirus TIP protein. In terms of assembly, (Microbial infection) Interacts with human cytomegalovirus protein UL138. As to quaternary structure, (Microbial infection) Interacts with Epstein-Barr virus protein EBNA3. Ubiquitous.

It is found in the nucleus. It localises to the cytoplasm. The protein localises to the lysosome. Its subcellular location is the late endosome. Functionally, regulator of deubiquitinating complexes, which acts as a strong activator of USP1, USP12 and USP46. Enhances the USP1-mediated deubiquitination of FANCD2; USP1 being almost inactive by itself. Activates deubiquitination by increasing the catalytic turnover without increasing the affinity of deubiquitinating enzymes for the substrate. Also activates deubiquitinating activity of complexes containing USP12. In complex with USP12, acts as a potential tumor suppressor by positively regulating PHLPP1 stability. Docks at the distal end of the USP12 fingers domain and induces a cascade of structural changes leading to the activation of the enzyme. Together with RAD51AP1, promotes DNA repair by stimulating RAD51-mediated homologous recombination. Binds single-stranded DNA (ssDNA) and double-stranded DNA (dsDNA). DNA-binding is required both for USP1-mediated deubiquitination of FANCD2 and stimulation of RAD51-mediated homologous recombination: both WDR48/UAF1 and RAD51AP1 have coordinated role in DNA-binding during these processes. Together with ATAD5 and by regulating USP1 activity, has a role in PCNA-mediated translesion synthesis (TLS) by deubiquitinating monoubiquitinated PCNA. Together with ATAD5, has a role in recruiting RAD51 to stalled forks during replication stress. In terms of biological role, (Microbial infection) In case of infection by Herpesvirus saimiri, may play a role in vesicular transport or membrane fusion events necessary for transport to lysosomes. Induces lysosomal vesicle formation via interaction with Herpesvirus saimiri tyrosine kinase-interacting protein (TIP). Subsequently, TIP recruits tyrosine-protein kinase LCK, resulting in down-regulation of T-cell antigen receptor TCR. May play a role in generation of enlarged endosomal vesicles via interaction with TIP. In case of infection by papillomavirus HPV11, promotes the maintenance of the viral genome via its interaction with HPV11 helicase E1. The chain is WD repeat-containing protein 48 from Homo sapiens (Human).